Reading from the N-terminus, the 608-residue chain is CTP synthase (608 aa).

The amidoligase domain stretch occupies residues 1 to 271 (MGQAHITKHI…DAYVVRRLGL (271 aa)). Ser18 contacts CTP. Ser18 lines the UTP pocket. Residues 19–24 (SLGKGL) and Asp76 contribute to the ATP site. Mg(2+)-binding residues include Asp76 and Glu145. Residues 152–154 (DIE), 192–197 (KTKPTQ), and Lys228 each bind CTP. UTP is bound by residues 192-197 (KTKPTQ) and Lys228. The Glutamine amidotransferase type-1 domain occupies 296–545 (TIAIVGKYVD…VAAAVAHADR (250 aa)). L-glutamine is bound at residue Gly359. Cys386 acts as the Nucleophile; for glutamine hydrolysis in catalysis. L-glutamine contacts are provided by residues 387–390 (LGLQ), Glu410, and Arg471. Catalysis depends on residues His518 and Glu520. The tract at residues 550–608 (LPVDLPSEDAPTPENGVPENGAAQTRGVTAGRSGGSIRRGASASRPSVSSNGTAALVSP) is disordered. Over residues 584-594 (GSIRRGASASR) the composition is skewed to low complexity.

It belongs to the CTP synthase family. Homotetramer.

The catalysed reaction is UTP + L-glutamine + ATP + H2O = CTP + L-glutamate + ADP + phosphate + 2 H(+). It catalyses the reaction L-glutamine + H2O = L-glutamate + NH4(+). The enzyme catalyses UTP + NH4(+) + ATP = CTP + ADP + phosphate + 2 H(+). It participates in pyrimidine metabolism; CTP biosynthesis via de novo pathway; CTP from UDP: step 2/2. Its activity is regulated as follows. Allosterically activated by GTP, when glutamine is the substrate; GTP has no effect on the reaction when ammonia is the substrate. The allosteric effector GTP functions by stabilizing the protein conformation that binds the tetrahedral intermediate(s) formed during glutamine hydrolysis. Inhibited by the product CTP, via allosteric rather than competitive inhibition. Catalyzes the ATP-dependent amination of UTP to CTP with either L-glutamine or ammonia as the source of nitrogen. Regulates intracellular CTP levels through interactions with the four ribonucleotide triphosphates. In Frankia casuarinae (strain DSM 45818 / CECT 9043 / HFP020203 / CcI3), this protein is CTP synthase.